The chain runs to 943 residues: Isoleucine--tRNA ligase (943 aa).

Positions 59 to 69 (PYANGQIHLGH) match the 'HIGH' region motif. Glu-577 is a binding site for L-isoleucyl-5'-AMP. The 'KMSKS' region motif lies at 618–622 (KMSKS). Lys-621 provides a ligand contact to ATP. Zn(2+) contacts are provided by Cys-906, Cys-909, Cys-926, and Cys-929.

The protein belongs to the class-I aminoacyl-tRNA synthetase family. IleS type 1 subfamily. As to quaternary structure, monomer. The cofactor is Zn(2+).

It localises to the cytoplasm. It catalyses the reaction tRNA(Ile) + L-isoleucine + ATP = L-isoleucyl-tRNA(Ile) + AMP + diphosphate. Its function is as follows. Catalyzes the attachment of isoleucine to tRNA(Ile). As IleRS can inadvertently accommodate and process structurally similar amino acids such as valine, to avoid such errors it has two additional distinct tRNA(Ile)-dependent editing activities. One activity is designated as 'pretransfer' editing and involves the hydrolysis of activated Val-AMP. The other activity is designated 'posttransfer' editing and involves deacylation of mischarged Val-tRNA(Ile). This Xanthomonas oryzae pv. oryzae (strain MAFF 311018) protein is Isoleucine--tRNA ligase.